A 209-amino-acid polypeptide reads, in one-letter code: Ribonuclease HII (209 aa).

The RNase H type-2 domain occupies G20–R209. A divalent metal cation is bound by residues D26, E27, and D118.

The protein belongs to the RNase HII family. Mn(2+) is required as a cofactor. Requires Mg(2+) as cofactor.

It is found in the cytoplasm. The catalysed reaction is Endonucleolytic cleavage to 5'-phosphomonoester.. In terms of biological role, endonuclease that specifically degrades the RNA of RNA-DNA hybrids. The protein is Ribonuclease HII of Verminephrobacter eiseniae (strain EF01-2).